The sequence spans 543 residues: Terpineol synthase, chloroplastic (543 aa).

The tract at residues 1–22 is disordered; sequence MNTEPSPNHYSAISSSDQNLTR. 5 residues coordinate (2E)-geranyl diphosphate: Arg263, Asp300, Asp304, Arg435, and Asn438. Residues Asp300 and Asp304 each contribute to the Mg(2+) site. The DDXXD motif signature appears at 300–304; that stretch reads DDVYD. Mg(2+)-binding residues include Asn438, Thr442, and Glu446.

The protein belongs to the terpene synthase family. Tpsb subfamily. As to quaternary structure, monomer. It depends on Mg(2+) as a cofactor. Requires Mn(2+) as cofactor. Confined to flowers.

It localises to the plastid. It is found in the chloroplast. The catalysed reaction is (2E)-geranyl diphosphate + H2O = (S)-alpha-terpineol + diphosphate. It catalyses the reaction (2E)-geranyl diphosphate = sabinene + diphosphate. It carries out the reaction (2E)-geranyl diphosphate = beta-myrcene + diphosphate. The enzyme catalyses (2E)-geranyl diphosphate = limonene + diphosphate. The catalysed reaction is (2E)-geranyl diphosphate + H2O = 1,8-cineole + diphosphate. The protein operates within secondary metabolite biosynthesis; terpenoid biosynthesis. Its function is as follows. Monoterpene synthase (TPS) involved in the biosynthesis of monoterpene natural products of the 'cineole cassette', volatile compounds present in floral scent. Catalyzes the conversion of (2E)-geranyl diphosphate (GPP) into alpha-terpineol and, as minor products, sabinene, beta-myrcene, limonene and 1,8-cineole. The protein is Terpineol synthase, chloroplastic of Nicotiana alata (Winged tobacco).